A 244-amino-acid chain; its full sequence is Orotidine 5'-phosphate decarboxylase (244 aa).

Substrate is bound by residues aspartate 14, lysine 36, 63–72 (DLKFHDIPNT), threonine 127, arginine 188, glutamine 197, glycine 217, and arginine 218. Lysine 65 acts as the Proton donor in catalysis.

Belongs to the OMP decarboxylase family. Type 1 subfamily. Homodimer.

It catalyses the reaction orotidine 5'-phosphate + H(+) = UMP + CO2. It participates in pyrimidine metabolism; UMP biosynthesis via de novo pathway; UMP from orotate: step 2/2. Its function is as follows. Catalyzes the decarboxylation of orotidine 5'-monophosphate (OMP) to uridine 5'-monophosphate (UMP). This is Orotidine 5'-phosphate decarboxylase from Syntrophotalea carbinolica (strain DSM 2380 / NBRC 103641 / GraBd1) (Pelobacter carbinolicus).